A 188-amino-acid chain; its full sequence is Ribosome maturation factor RimM (188 aa).

One can recognise a PRC barrel domain in the interval 103–177; the sequence is EEGWYYADLI…RVVIDPPAGT (75 aa).

It belongs to the RimM family. In terms of assembly, binds ribosomal protein uS19.

It localises to the cytoplasm. Functionally, an accessory protein needed during the final step in the assembly of 30S ribosomal subunit, possibly for assembly of the head region. Essential for efficient processing of 16S rRNA. May be needed both before and after RbfA during the maturation of 16S rRNA. It has affinity for free ribosomal 30S subunits but not for 70S ribosomes. This Parvibaculum lavamentivorans (strain DS-1 / DSM 13023 / NCIMB 13966) protein is Ribosome maturation factor RimM.